We begin with the raw amino-acid sequence, 420 residues long: Protein translocase subunit SecY (420 aa).

A run of 10 helical transmembrane segments spans residues 9–29 (ILIT…PIPG), 61–81 (LSII…MELL), 104–124 (IVRY…SVGL), 141–161 (VFMI…MWIG), 173–193 (ISLI…SGTF), 203–223 (ILML…IIYV), 257–277 (LSGV…STIL), 300–320 (YNIL…SIVF), 355–375 (KLTL…WILV), and 377–397 (AMGV…QVAI).

Belongs to the SecY/SEC61-alpha family. Component of the Sec protein translocase complex. Heterotrimer consisting of SecY, SecE and SecG subunits. The heterotrimers can form oligomers, although 1 heterotrimer is thought to be able to translocate proteins. Interacts with the ribosome. Interacts with SecDF, and other proteins may be involved. Interacts with SecA.

The protein localises to the cell inner membrane. Functionally, the central subunit of the protein translocation channel SecYEG. Consists of two halves formed by TMs 1-5 and 6-10. These two domains form a lateral gate at the front which open onto the bilayer between TMs 2 and 7, and are clamped together by SecE at the back. The channel is closed by both a pore ring composed of hydrophobic SecY resides and a short helix (helix 2A) on the extracellular side of the membrane which forms a plug. The plug probably moves laterally to allow the channel to open. The ring and the pore may move independently. The sequence is that of Protein translocase subunit SecY from Helicobacter pylori (strain ATCC 700392 / 26695) (Campylobacter pylori).